A 427-amino-acid polypeptide reads, in one-letter code: Inward rectifier potassium channel 2 (427 aa).

Residues 1–81 (MGSVRTNRYS…IFTTCVDIRW (81 aa)) lie on the Cytoplasmic side of the membrane. Cysteine 76 bears the S-nitrosocysteine mark. A helical membrane pass occupies residues 82-106 (RWMLVIFCLAFVLSWLFFGCVFWLI). Residues 107–128 (ALLHGDLDASKESKACVSEVNS) lie on the Extracellular side of the membrane. Positions 129–140 (FTAAFLFSIETQ) form an intramembrane region, helical; Pore-forming. The segment at residues 141-147 (TTIGYGF) is an intramembrane region (pore-forming). Positions 142-147 (TIGYGF) match the Selectivity filter motif. The Extracellular portion of the chain corresponds to 148–156 (RCVTDECPI). Residues 157–178 (AVFMVVFQSIVGCIIDAFIIGA) traverse the membrane as a helical segment. At 179 to 427 (VMAKMAKPKK…PRPLRRESEI (249 aa)) the chain is on the cytoplasmic side. The tract at residues 181-208 (AKMAKPKKRNETLVFSHNAVIAMRDGKL) is polyphosphoinositide (PIP2)-binding. A disordered region spans residues 384–427 (SKEEDDSENGVPESTSTDTPPDIDLHNQASVPLEPRPLRRESEI). The short motif at 425–427 (SEI) is the PDZ-binding element.

It belongs to the inward rectifier-type potassium channel (TC 1.A.2.1) family. KCNJ2 subfamily. Homotetramer. Homomultimeric and heteromultimeric association with KCNJ4/Kir2.3. Can form heteromeric channels with Kir2.6/KCNJ18. Associates, via its PDZ-recognition domain, with a complex containing LIN7A, LIN7B, LIN7C, DLG1, CASK and APBA1. In terms of processing, S-nitrosylation increases the open probability and inward rectifying currents.

The protein localises to the cell membrane. It localises to the sarcolemma. It is found in the T-tubule. It carries out the reaction K(+)(in) = K(+)(out). Its activity is regulated as follows. Activated by phosphatidylinositol 4,5 biphosphate (PtdIns(4,5)P2). In terms of biological role, inward rectifier potassium channels are characterized by a greater tendency to allow potassium to flow into the cell rather than out of it. Their voltage dependence is regulated by the concentration of extracellular potassium; as external potassium is raised, the voltage range of the channel opening shifts to more positive voltages. The inward rectification is mainly due to the blockage of outward current by internal magnesium. Blocked by external barium or cesium. Probably participates in establishing action potential waveform and excitability of neuronal and muscle tissues. This chain is Inward rectifier potassium channel 2 (KCNJ2), found in Cavia porcellus (Guinea pig).